The primary structure comprises 514 residues: Maltose/maltodextrin transport system permease protein MalF (514 aa).

Residues 1–12 (MDAVKKKHWWQS) are Cytoplasmic-facing. Residues 13 to 35 (PQLTWSVIGLLCLLVGYLVVLMY) traverse the membrane as a helical segment. The Periplasmic segment spans residues 36 to 39 (AQGE). A helical membrane pass occupies residues 40-57 (YLFAIMTLILSSVGLYIF). The Cytoplasmic segment spans residues 58-69 (SNRKAYAWRYVY). The chain crosses the membrane as a helical span at residues 70-92 (PGLAGMGLFVLFPLICTIAIAFT). At 93-283 (NYSSTNQLTF…QKPFFAIFVW (191 aa)) the chain is on the periplasmic side. Residues 281 to 505 (FVWTVVFSVL…LLVGALAIVN (225 aa)) enclose the ABC transmembrane type-1 domain. Residues 284–306 (TVVFSVLTVILTVAVGMVLACLV) traverse the membrane as a helical segment. Over 307 to 318 (QWEALKGKAIYR) the chain is Cytoplasmic. The helical transmembrane segment at 319-341 (VLLILPYAVPSFISILIFKGLFN) threads the bilayer. Over 342 to 369 (QSFGEINMMLSALFGIKPAWFSDPTTAR) the chain is Periplasmic. A helical membrane pass occupies residues 370 to 392 (TMIIIVNTWLGYPYMMILCMGLL). Residues 393-412 (KAIPDDLYEASAMDGAGPFQ) are Cytoplasmic-facing. Residues 413–435 (NFFKITLPLLIKPLTPLMIASFA) traverse the membrane as a helical segment. Residues 436-483 (FNFNNFVLIQLLTNGGPDRLGTTTPAGYTDLLVSYTYRIAFEGGGGQD) are Periplasmic-facing. The chain crosses the membrane as a helical span at residues 484 to 506 (FGLAAAIATLIFLLVGALAIVNL). Topologically, residues 507 to 514 (KATRMKFD) are cytoplasmic.

The protein belongs to the binding-protein-dependent transport system permease family. MalFG subfamily. In terms of assembly, the complex is composed of two ATP-binding proteins (MalK), two transmembrane proteins (MalG and MalF) and a solute-binding protein (MalE).

The protein localises to the cell inner membrane. Part of the ABC transporter complex MalEFGK involved in maltose/maltodextrin import. Probably responsible for the translocation of the substrate across the membrane. The protein is Maltose/maltodextrin transport system permease protein MalF (malF) of Klebsiella aerogenes (Enterobacter aerogenes).